The following is a 704-amino-acid chain: SH3KBP1-binding protein 1 (704 aa).

An N-acetylalanine modification is found at alanine 2. The region spanning 19–88 (EVIHLNVGGK…LRTKELDPRG (70 aa)) is the BTB domain. The tract at residues 146 to 165 (VGPQQIGGRPAPVRRSNTMP) is disordered. Phosphothreonine is present on threonine 163. WD repeat units lie at residues 233 to 280 (RLDW…GGSE), 283 to 322 (VFHL…WQVQ), 324 to 359 (VQPI…LRMK), 428 to 466 (VHRS…GMIS), and 548 to 586 (LECE…DGLG). The interval 609 to 704 (PLASSRGSFP…LKKTLNETSF (96 aa)) is disordered. The span at 612-631 (SSRGSFPSPSPRTSLTSLHS) shows a compositional bias: low complexity. The PXXXPR motif lies at 618–623 (PSPSPR). Serine 644 and serine 646 each carry phosphoserine. A PXXXPR motif is present at residues 678–683 (PTPAPR). Threonine 693 bears the Phosphothreonine mark.

This sequence belongs to the KCTD3 family. As to quaternary structure, monomer. Interacts with CUL3; interaction is direct and forms a 5:5 heterodecamer. Interacts (via PXXXPR motifs) with SH3KBP1 (via SH3 domains). Directly interacts with cathepsin B/CTSB.

The protein resides in the lysosome. Functionally, inhibits CBL-SH3KBP1 complex mediated down-regulation of EGFR signaling by sequestration of SH3KBP1. Binds to SH3KBP1 and prevents its interaction with CBL and inhibits translocation of SH3KBP1 to EGFR containing vesicles upon EGF stimulation. In Mus musculus (Mouse), this protein is SH3KBP1-binding protein 1 (Shkbp1).